Here is a 114-residue protein sequence, read N- to C-terminus: Nucleoid-associated protein CKL_3826 (114 aa).

It belongs to the YbaB/EbfC family. In terms of assembly, homodimer.

The protein localises to the cytoplasm. It localises to the nucleoid. In terms of biological role, binds to DNA and alters its conformation. May be involved in regulation of gene expression, nucleoid organization and DNA protection. This is Nucleoid-associated protein CKL_3826 from Clostridium kluyveri (strain ATCC 8527 / DSM 555 / NBRC 12016 / NCIMB 10680 / K1).